The following is a 712-amino-acid chain: Polyribonucleotide nucleotidyltransferase (712 aa).

2 residues coordinate Mg(2+): D487 and D493. Positions P554–I613 constitute a KH domain. Positions G623 to K691 constitute an S1 motif domain.

Belongs to the polyribonucleotide nucleotidyltransferase family. The cofactor is Mg(2+).

It is found in the cytoplasm. It catalyses the reaction RNA(n+1) + phosphate = RNA(n) + a ribonucleoside 5'-diphosphate. Its function is as follows. Involved in mRNA degradation. Catalyzes the phosphorolysis of single-stranded polyribonucleotides processively in the 3'- to 5'-direction. This is Polyribonucleotide nucleotidyltransferase from Bacillus cereus (strain ATCC 14579 / DSM 31 / CCUG 7414 / JCM 2152 / NBRC 15305 / NCIMB 9373 / NCTC 2599 / NRRL B-3711).